A 143-amino-acid chain; its full sequence is Large ribosomal subunit protein uL13 (143 aa).

It belongs to the universal ribosomal protein uL13 family. As to quaternary structure, part of the 50S ribosomal subunit.

In terms of biological role, this protein is one of the early assembly proteins of the 50S ribosomal subunit, although it is not seen to bind rRNA by itself. It is important during the early stages of 50S assembly. This chain is Large ribosomal subunit protein uL13, found in Prochlorococcus marinus (strain MIT 9312).